The chain runs to 131 residues: Peptide methionine sulfoxide reductase MsrB (131 aa).

One can recognise a MsrB domain in the interval 8-130 (LDTWREELTD…NSLSLKLVPR (123 aa)). Cys47, Cys50, Cys96, and Cys99 together coordinate Zn(2+). Cys119 (nucleophile) is an active-site residue.

Belongs to the MsrB Met sulfoxide reductase family. Zn(2+) is required as a cofactor.

It carries out the reaction L-methionyl-[protein] + [thioredoxin]-disulfide + H2O = L-methionyl-(R)-S-oxide-[protein] + [thioredoxin]-dithiol. The protein is Peptide methionine sulfoxide reductase MsrB of Ectopseudomonas mendocina (strain ymp) (Pseudomonas mendocina).